A 270-amino-acid polypeptide reads, in one-letter code: Elongation factor Ts (270 aa).

An involved in Mg(2+) ion dislocation from EF-Tu region spans residues 77-80; that stretch reads TDFV.

The protein belongs to the EF-Ts family.

The protein localises to the cytoplasm. Associates with the EF-Tu.GDP complex and induces the exchange of GDP to GTP. It remains bound to the aminoacyl-tRNA.EF-Tu.GTP complex up to the GTP hydrolysis stage on the ribosome. In Nocardioides sp. (strain ATCC BAA-499 / JS614), this protein is Elongation factor Ts.